A 1148-amino-acid chain; its full sequence is Alpha-mannosidase 2 (1148 aa).

The Cytoplasmic portion of the chain corresponds to 1-5 (MKLSR). A helical; Signal-anchor for type II membrane protein membrane pass occupies residues 6 to 26 (QFTVFGSAIFCVVIFSLYLML). Residues 27–1148 (DRGHLDYPRG…EISTSRIRLR (1122 aa)) lie on the Lumenal side of the membrane. Phosphoserine is present on residues Ser-80 and Ser-82. An N-linked (GlcNAc...) asparagine glycan is attached at Asn-93. Residues His-174, Asp-176, Asp-288, and His-568 each coordinate Zn(2+). Residue Asp-288 is the Nucleophile of the active site. Residues 1121 to 1148 (MHSPPDAQNTSEVSLSPMEISTSRIRLR) are disordered.

It belongs to the glycosyl hydrolase 38 family. As to quaternary structure, homodimer; disulfide-linked. Zn(2+) is required as a cofactor. In terms of processing, glycosylated. In terms of tissue distribution, liver.

The protein localises to the golgi apparatus membrane. It carries out the reaction N(4)-{beta-D-GlcNAc-(1-&gt;2)-alpha-D-Man-(1-&gt;3)-[alpha-D-Man-(1-&gt;3)-[alpha-D-Man-(1-&gt;6)]-alpha-D-Man-(1-&gt;6)]-beta-D-Man-(1-&gt;4)-beta-D-GlcNAc-(1-&gt;4)-beta-D-GlcNAc}-L-asparaginyl-[protein] + 2 H2O = 2 alpha-D-mannopyranose + an N(4)-{beta-D-GlcNAc-(1-&gt;2)-alpha-D-Man-(1-&gt;3)-[alpha-D-Man-(1-&gt;6)]-beta-D-Man-(1-&gt;4)-beta-D-GlcNAc-(1-&gt;4)-beta-D-GlcNAc}-L-asparaginyl-[protein]. Its pathway is protein modification; protein glycosylation. Inhibited by swainsonine. In terms of biological role, catalyzes the first committed step in the biosynthesis of complex N-glycans. It controls conversion of high mannose to complex N-glycans; the final hydrolytic step in the N-glycan maturation pathway. The protein is Alpha-mannosidase 2 (Man2a1) of Rattus norvegicus (Rat).